Consider the following 255-residue polypeptide: Acetyl-coenzyme A carboxylase carboxyl transferase subunit alpha (255 aa).

The 235-residue stretch at 1–235 folds into the CoA carboxyltransferase C-terminal domain; that stretch reads MNIAKIVREA…KKELQTELAR (235 aa).

Belongs to the AccA family. Acetyl-CoA carboxylase is a heterohexamer composed of biotin carboxyl carrier protein (AccB), biotin carboxylase (AccC) and two subunits each of ACCase subunit alpha (AccA) and ACCase subunit beta (AccD).

It localises to the cytoplasm. It carries out the reaction N(6)-carboxybiotinyl-L-lysyl-[protein] + acetyl-CoA = N(6)-biotinyl-L-lysyl-[protein] + malonyl-CoA. The protein operates within lipid metabolism; malonyl-CoA biosynthesis; malonyl-CoA from acetyl-CoA: step 1/1. Functionally, component of the acetyl coenzyme A carboxylase (ACC) complex. First, biotin carboxylase catalyzes the carboxylation of biotin on its carrier protein (BCCP) and then the CO(2) group is transferred by the carboxyltransferase to acetyl-CoA to form malonyl-CoA. In Streptococcus pneumoniae serotype 19F (strain G54), this protein is Acetyl-coenzyme A carboxylase carboxyl transferase subunit alpha.